The primary structure comprises 351 residues: Protein arginine N-methyltransferase 1-B (351 aa).

Residues 30 to 331 (KDYYFDSYAH…KNNRDLDFTV (302 aa)) form the SAM-dependent MTase PRMT-type domain. S-adenosyl-L-methionine is bound by residues histidine 43, arginine 52, glycine 76, glutamate 98, and glutamate 127. Catalysis depends on residues glutamate 142 and glutamate 151.

This sequence belongs to the class I-like SAM-binding methyltransferase superfamily. Protein arginine N-methyltransferase family. Homodimer. Homooctamer; individual homodimers associates to form a homooctamer and homooligomerization is required for proper localization to the cell membrane. Individual homodimers can associate to form a homohexamer. Component of a complex with lsm14a/rap55a. Interacts with cirbp. In terms of tissue distribution, from the onset of gastrulation, expressed in dorsal mesoderm, and in dorsal and ventral ectoderm. At the neurula and tail bud stages, expression is restricted to the neuroectoderm, with highest expression in the anterior neural plate.

Its subcellular location is the nucleus. It is found in the nucleoplasm. The protein localises to the cytoplasm. It localises to the cytosol. It catalyses the reaction L-arginyl-[protein] + 2 S-adenosyl-L-methionine = N(omega),N(omega)-dimethyl-L-arginyl-[protein] + 2 S-adenosyl-L-homocysteine + 2 H(+). It carries out the reaction L-arginyl-[protein] + S-adenosyl-L-methionine = N(omega)-methyl-L-arginyl-[protein] + S-adenosyl-L-homocysteine + H(+). The catalysed reaction is N(omega)-methyl-L-arginyl-[protein] + S-adenosyl-L-methionine = N(omega),N(omega)-dimethyl-L-arginyl-[protein] + S-adenosyl-L-homocysteine + H(+). In terms of biological role, arginine methyltransferase that methylates (mono and asymmetric dimethylation) the guanidino nitrogens of arginyl residues present in target proteins. Constitutes the main enzyme that mediates monomethylation and asymmetric dimethylation of histone H4 'Arg-4' (H4R3me1 and H4R3me2a, respectively), a specific tag for epigenetic transcriptional activation. Methylates ilf3 to regulate its DNA-binding activity. Required for neural induction, playing a key role in the control of epidermal versus neural cell fate choice. In Xenopus laevis (African clawed frog), this protein is Protein arginine N-methyltransferase 1-B (prmt1-b).